Here is a 337-residue protein sequence, read N- to C-terminus: MIEADRLIAADNPVFRDEEVIDRAIRPKKLEDYRGQDHVRSQMEIFIKAAQMRQEPLDHLLIFGPPGLGKTTLANIVANEMGVSIRTTSGPVLEKAGDLAALLTNLEENDILFIDEIHRLSPVVEEILYPAMEDYQLDIMIGEGPAARSIKIDLPPFTLIGATTRAGSLTSPLRDRFGIVQRLEYYKVDDLQYIVQRSADCLNLSMESEGALEVARRARGTPRIANRLLRRVRDYADVMSDSHISPDIADKALNMLDVDVCGFDYMDRKLLLAIMEKFNGGPVGLDNVAAAIGEEKDTIEDVIEPYLIQQGYLQRTPRGRIVSDRAYLHFGIDRPDK.

The segment at 4 to 186 is large ATPase domain (RuvB-L); sequence ADRLIAADNP…FGIVQRLEYY (183 aa). Residues Ile25, Arg26, Gly67, Lys70, Thr71, Thr72, 133–135, Arg176, Tyr186, and Arg223 each bind ATP; that span reads EDY. Thr71 provides a ligand contact to Mg(2+). The interval 187–257 is small ATPAse domain (RuvB-S); that stretch reads KVDDLQYIVQ…IADKALNMLD (71 aa). The tract at residues 260 to 337 is head domain (RuvB-H); that stretch reads VCGFDYMDRK…LHFGIDRPDK (78 aa). DNA is bound by residues Arg315 and Arg320.

It belongs to the RuvB family. Homohexamer. Forms an RuvA(8)-RuvB(12)-Holliday junction (HJ) complex. HJ DNA is sandwiched between 2 RuvA tetramers; dsDNA enters through RuvA and exits via RuvB. An RuvB hexamer assembles on each DNA strand where it exits the tetramer. Each RuvB hexamer is contacted by two RuvA subunits (via domain III) on 2 adjacent RuvB subunits; this complex drives branch migration. In the full resolvosome a probable DNA-RuvA(4)-RuvB(12)-RuvC(2) complex forms which resolves the HJ.

The protein localises to the cytoplasm. The catalysed reaction is ATP + H2O = ADP + phosphate + H(+). The RuvA-RuvB-RuvC complex processes Holliday junction (HJ) DNA during genetic recombination and DNA repair, while the RuvA-RuvB complex plays an important role in the rescue of blocked DNA replication forks via replication fork reversal (RFR). RuvA specifically binds to HJ cruciform DNA, conferring on it an open structure. The RuvB hexamer acts as an ATP-dependent pump, pulling dsDNA into and through the RuvAB complex. RuvB forms 2 homohexamers on either side of HJ DNA bound by 1 or 2 RuvA tetramers; 4 subunits per hexamer contact DNA at a time. Coordinated motions by a converter formed by DNA-disengaged RuvB subunits stimulates ATP hydrolysis and nucleotide exchange. Immobilization of the converter enables RuvB to convert the ATP-contained energy into a lever motion, pulling 2 nucleotides of DNA out of the RuvA tetramer per ATP hydrolyzed, thus driving DNA branch migration. The RuvB motors rotate together with the DNA substrate, which together with the progressing nucleotide cycle form the mechanistic basis for DNA recombination by continuous HJ branch migration. Branch migration allows RuvC to scan DNA until it finds its consensus sequence, where it cleaves and resolves cruciform DNA. This chain is Holliday junction branch migration complex subunit RuvB, found in Aliivibrio salmonicida (strain LFI1238) (Vibrio salmonicida (strain LFI1238)).